The chain runs to 243 residues: UPF0246 protein SpyM51747 (243 aa).

It belongs to the UPF0246 family.

The chain is UPF0246 protein SpyM51747 from Streptococcus pyogenes serotype M5 (strain Manfredo).